The primary structure comprises 214 residues: Ribonuclease HII (214 aa).

In terms of domain architecture, RNase H type-2 spans 26–214 (EIVCGVDEAG…PVRAALDLIR (189 aa)). A divalent metal cation is bound by residues Asp32, Glu33, and Asp124.

Belongs to the RNase HII family. It depends on Mn(2+) as a cofactor. Requires Mg(2+) as cofactor.

Its subcellular location is the cytoplasm. The enzyme catalyses Endonucleolytic cleavage to 5'-phosphomonoester.. Endonuclease that specifically degrades the RNA of RNA-DNA hybrids. This Burkholderia cenocepacia (strain HI2424) protein is Ribonuclease HII.